The following is a 929-amino-acid chain: Patatin-like phospholipase domain-containing protein CNE02340 (929 aa).

Residues Q37–R85 form a disordered region. The segment covering S43–P54 has biased composition (low complexity). A helical transmembrane segment spans residues W126–T146. The PNPLA domain maps to L301–H493. The GXSXG signature appears at G332 to G336. The Nucleophile role is filled by S334. D480 (proton acceptor) is an active-site residue. Disordered regions lie at residues A644–D765, L778–R806, and V818–A929. 2 stretches are compositionally biased toward polar residues: residues N652 to E664 and P745 to G764. Over residues S779 to R806 the composition is skewed to low complexity. The segment covering V856–Y878 has biased composition (basic and acidic residues).

This sequence belongs to the PLPL family.

It localises to the membrane. In terms of biological role, probable lipid hydrolase. The sequence is that of Patatin-like phospholipase domain-containing protein CNE02340 from Cryptococcus neoformans var. neoformans serotype D (strain JEC21 / ATCC MYA-565) (Filobasidiella neoformans).